The primary structure comprises 203 residues: HTH-type transcriptional regulator CymR (203 aa).

The region spanning 13–73 (METQGKLIAA…ATFEWLYEQI (61 aa)) is the HTH tetR-type domain. Residues 36–55 (RIADVPGAAGVSRGAQSHHF) constitute a DNA-binding region (H-T-H motif).

Involved in the repression of the cym and cmt operons which are responsible of the p-cymene degradation. The protein is HTH-type transcriptional regulator CymR of Pseudomonas putida (Arthrobacter siderocapsulatus).